Here is a 189-residue protein sequence, read N- to C-terminus: dCTP deaminase (189 aa).

DCTP-binding positions include 112–117, 136–138, glutamine 157, tyrosine 171, and glutamine 181; these read KSTYAR and TLE. Glutamate 138 acts as the Proton donor/acceptor in catalysis.

Belongs to the dCTP deaminase family. Homotrimer.

The catalysed reaction is dCTP + H2O + H(+) = dUTP + NH4(+). It functions in the pathway pyrimidine metabolism; dUMP biosynthesis; dUMP from dCTP (dUTP route): step 1/2. In terms of biological role, catalyzes the deamination of dCTP to dUTP. This chain is dCTP deaminase, found in Burkholderia thailandensis (strain ATCC 700388 / DSM 13276 / CCUG 48851 / CIP 106301 / E264).